Reading from the N-terminus, the 463-residue chain is Probable glycosyltransferase 3 (463 aa).

The segment at 1-20 (MAVTGGGRPAARQQAARGKQ) is disordered. The Cytoplasmic segment spans residues 1–24 (MAVTGGGRPAARQQAARGKQMQRT). Low complexity predominate over residues 9-20 (PAARQQAARGKQ). A helical; Signal-anchor for type II membrane protein transmembrane segment spans residues 25–47 (FNNVKITLICGFITLLVLRGTVG). At 48 to 463 (INLLTYGVGG…ALKMDAKIES (416 aa)) the chain is on the lumenal side. The interval 82–125 (EIRSDTDDDDDDEEEEPLGVDASTTTTTNSTTTTATAARRRSSN) is disordered. The span at 87–99 (TDDDDDDEEEEPL) shows a compositional bias: acidic residues. The segment covering 103 to 118 (ASTTTTTNSTTTTATA) has biased composition (low complexity). N-linked (GlcNAc...) asparagine glycans are attached at residues Asn-110, Asn-125, and Asn-442.

It belongs to the glycosyltransferase 34 family.

It is found in the golgi apparatus membrane. In terms of biological role, probable glycosyltransferase that may be involved in the biosynthesis of xyloglucan. In Oryza sativa subsp. indica (Rice), this protein is Probable glycosyltransferase 3.